A 346-amino-acid chain; its full sequence is Protein RecA (346 aa).

68-75 provides a ligand contact to ATP; it reads GPESSGKT.

Belongs to the RecA family.

Its subcellular location is the cytoplasm. In terms of biological role, can catalyze the hydrolysis of ATP in the presence of single-stranded DNA, the ATP-dependent uptake of single-stranded DNA by duplex DNA, and the ATP-dependent hybridization of homologous single-stranded DNAs. It interacts with LexA causing its activation and leading to its autocatalytic cleavage. The chain is Protein RecA from Heliobacterium modesticaldum (strain ATCC 51547 / Ice1).